A 356-amino-acid chain; its full sequence is Phenylalanine dehydrogenase (356 aa).

Arginine 43 provides a ligand contact to NAD(+). Residue lysine 67 coordinates L-phenylalanine. The active-site Proton donor/acceptor is the lysine 79. 118–119 (PD) serves as a coordination point for L-phenylalanine. NAD(+) is bound by residues aspartate 119, serine 150, threonine 154, 183–189 (GLGAVGG), 206–207 (DT), arginine 211, 240–241 (AM), and 261–263 (AAN). L-phenylalanine is bound at residue asparagine 263.

Belongs to the Glu/Leu/Phe/Val dehydrogenases family. Homotetramer, dimer of dimers.

It catalyses the reaction L-phenylalanine + NAD(+) + H2O = 3-phenylpyruvate + NH4(+) + NADH + H(+). It functions in the pathway amino-acid biosynthesis; L-phenylalanine biosynthesis; L-phenylalanine from phenylpyruvate (PDH route): step 1/1. With respect to regulation, subject to competitive inhibition by 3-phenylpropionate for the conversion of L-phenylalanine to phenylpyruvate. Subject to competitive inhibition by D-phenylalanine for the conversion of phenylpyruvate to L-phenylalanine. Functionally, catalyzes the reversible NAD(+)-dependent oxidative deamination of L-phenylalanine to phenylpyruvate. The protein is Phenylalanine dehydrogenase of Rhodococcus sp.